The chain runs to 450 residues: Bifunctional apoptosis regulator (450 aa).

The span at 1–20 (MEEPQKNDLSMREQEEEHPV) shows a compositional bias: basic and acidic residues. Positions 1–25 (MEEPQKNDLSMREQEEEHPVRSSGP) are disordered. Residues 1–140 (MEEPQKNDLS…PSTGRVNPQR (140 aa)) are Cytoplasmic-facing. Residues 34–74 (CHCCYDTLVNPTTLNCGHSFCRHCLALWWMSSKKTECPECR) form an RING-type zinc finger. A helical transmembrane segment spans residues 141-161 (GGGFFSGVLTALTGVAVILLV). Residues 162 to 331 (YHWRSRESEH…REPTWKQWRE (170 aa)) are Extracellular-facing. Residues 182-249 (WTMEEVVLWL…LTELERVRAL (68 aa)) form the SAM domain. 2 N-linked (GlcNAc...) asparagine glycosylation sites follow: Asn232 and Asn308. Residues 332–352 (FLVKYSFLPYQLIAEFAWDWL) traverse the membrane as a helical segment. The Cytoplasmic segment spans residues 353-360 (EVHYWTSR). A helical membrane pass occupies residues 361–381 (FLIVNAVLLSVLELFSFWRIW). Residues 382 to 404 (SRSELKTVPQRMWSHFWKVSTQG) lie on the Extracellular side of the membrane. Residues 405-425 (LFMAMFWPLIPQFVCNCLFYW) form a helical membrane-spanning segment. The Cytoplasmic portion of the chain corresponds to 426–450 (ALYFNPIINIDLVVKEVRRLETQVL).

Interacts with CASP8, BCL2 and BCL2L1 through SAM domain and also with HIP1, IFT57, ESRRBL1 and BCAP31. Interacts with NGFR; this interaction inhibits NF-kappa-B and JNK-related signaling pathways. In terms of processing, mediates RING-dependent self-ubiquitination leading to proteasomal degradation.

It localises to the endoplasmic reticulum membrane. It carries out the reaction S-ubiquitinyl-[E2 ubiquitin-conjugating enzyme]-L-cysteine + [acceptor protein]-L-lysine = [E2 ubiquitin-conjugating enzyme]-L-cysteine + N(6)-ubiquitinyl-[acceptor protein]-L-lysine.. Functionally, membrane-bound E3 ubiquitin ligase that plays a role in several processes including apoptosis regulation or reticulum endoplasmic stress. Has anti-apoptotic activity, both for apoptosis triggered via death-receptors and via mitochondrial factors. Contributes to the dynamic control of IRE1/ERN1 signaling during ER stress by inducing BAX inhibitor 1/TMBIM6 proteasomal degradation. Promotes the activation of TGF-beta signaling by mediating the 'Lys-63'-linked ubiquitination of TGFBR1 which is critical to activate the pathway. Together with NGFR, negatively regulates NF-kappa-B and JNK-related signaling pathways. Promotes the proteasome-mediated degradation of PNPLA3, a protein involveld in lipid metabolism. The sequence is that of Bifunctional apoptosis regulator (Bfar) from Mus musculus (Mouse).